Consider the following 54-residue polypeptide: Large ribosomal subunit protein eL37 (54 aa).

Residues Cys-20, Cys-23, Cys-35, and Cys-38 each coordinate Zn(2+). Residues 20–38 (CRRCGHHTYNVRTKRCSHC) form a C4-type zinc finger.

This sequence belongs to the eukaryotic ribosomal protein eL37 family. Requires Zn(2+) as cofactor.

Its function is as follows. Binds to the 23S rRNA. The protein is Large ribosomal subunit protein eL37 (rpl37e) of Thermoplasma volcanium (strain ATCC 51530 / DSM 4299 / JCM 9571 / NBRC 15438 / GSS1).